The primary structure comprises 198 residues: Recombination protein RecR (198 aa).

The segment at 57–72 (CSICCNLSEHDPCPIC) adopts a C4-type zinc-finger fold. The Toprim domain occupies 80–175 (NIVCVVETPQ…KVTRLGYGLP (96 aa)).

Belongs to the RecR family.

May play a role in DNA repair. It seems to be involved in an RecBC-independent recombinational process of DNA repair. It may act with RecF and RecO. This chain is Recombination protein RecR, found in Endomicrobium trichonymphae.